The sequence spans 184 residues: ATP synthase subunit b 1 (184 aa).

Residues 36–55 (NILNLAILVGVLVFYGRKVV) traverse the membrane as a helical segment.

It belongs to the ATPase B chain family. F-type ATPases have 2 components, F(1) - the catalytic core - and F(0) - the membrane proton channel. F(1) has five subunits: alpha(3), beta(3), gamma(1), delta(1), epsilon(1). F(0) has four main subunits: a(1), b(1), b'(1) and c(10-14). The alpha and beta chains form an alternating ring which encloses part of the gamma chain. F(1) is attached to F(0) by a central stalk formed by the gamma and epsilon chains, while a peripheral stalk is formed by the delta, b and b' chains.

Its subcellular location is the cellular thylakoid membrane. In terms of biological role, f(1)F(0) ATP synthase produces ATP from ADP in the presence of a proton or sodium gradient. F-type ATPases consist of two structural domains, F(1) containing the extramembraneous catalytic core and F(0) containing the membrane proton channel, linked together by a central stalk and a peripheral stalk. During catalysis, ATP synthesis in the catalytic domain of F(1) is coupled via a rotary mechanism of the central stalk subunits to proton translocation. Its function is as follows. Component of the F(0) channel, it forms part of the peripheral stalk, linking F(1) to F(0). In Crocosphaera subtropica (strain ATCC 51142 / BH68) (Cyanothece sp. (strain ATCC 51142)), this protein is ATP synthase subunit b 1.